Reading from the N-terminus, the 538-residue chain is Nicotinate phosphoribosyltransferase (538 aa).

2 residues coordinate nicotinate: tyrosine 21 and threonine 210. A Phosphohistidine modification is found at histidine 213. Residue arginine 318 coordinates nicotinate. 5-phospho-alpha-D-ribose 1-diphosphate is bound at residue threonine 380.

The protein belongs to the NAPRTase family. In terms of assembly, homodimer. Mg(2+) is required as a cofactor. Mn(2+) serves as cofactor. Transiently phosphorylated on a His residue during the reaction cycle. Phosphorylation strongly increases the affinity for substrates and increases the rate of nicotinate D-ribonucleotide production. Dephosphorylation regenerates the low-affinity form of the enzyme, leading to product release. In terms of tissue distribution, abundantly expressed in the small intestine, liver and kidney.

It is found in the cytoplasm. Its subcellular location is the cytosol. The catalysed reaction is nicotinate + 5-phospho-alpha-D-ribose 1-diphosphate + ATP + H2O = nicotinate beta-D-ribonucleotide + ADP + phosphate + diphosphate. Its pathway is cofactor biosynthesis; NAD(+) biosynthesis; nicotinate D-ribonucleotide from nicotinate: step 1/1. Catalyzes the first step in the biosynthesis of NAD from nicotinic acid, the ATP-dependent synthesis of beta-nicotinate D-ribonucleotide from nicotinate and 5-phospho-D-ribose 1-phosphate. Helps prevent cellular oxidative stress via its role in NAD biosynthesis. This Mus musculus (Mouse) protein is Nicotinate phosphoribosyltransferase (Naprt).